The primary structure comprises 319 residues: D-galacturonate reductase (319 aa).

The active-site Proton donor is Y58. H121 provides a ligand contact to substrate. An NADP(+)-binding site is contributed by 216 to 275 (SPLGAARTKWGDDRVLGSDIIEEIAQAKGKSTAQISLRWVYEQGVSIVTKSYNKERMRQN).

The protein belongs to the aldo/keto reductase family. In terms of tissue distribution, expressed specifically in the receptacle tissue of the fruit.

The catalysed reaction is L-galactonate + NADP(+) = aldehydo-D-galacturonate + NADPH + H(+). It participates in cofactor biosynthesis; L-ascorbate biosynthesis. In terms of biological role, involved in ascorbic acid (vitamin C) biosynthesis. The protein is D-galacturonate reductase (GALUR) of Fragaria ananassa (Strawberry).